Here is an 815-residue protein sequence, read N- to C-terminus: ABC transporter G family member 7 (815 aa).

Disordered regions lie at residues 81–141 and 177–249; these read NNID…TPNF and KQIK…TNGK. Residues 164–199 are a coiled coil; sequence ENISYKTENRNYKKQIKDEKKRKKKLEMERSNSSNS. The span at 194–210 shows a compositional bias: low complexity; it reads SNSSNSNSSYDVESSAS. The segment covering 211 to 248 has biased composition (polar residues); that stretch reads GLQTPQQSRSSILPTNSLNISKIDQSMNPQQTRSTTNG. The region spanning 242 to 485 is the ABC transporter domain; it reads TRSTTNGKIE…SLPNQYQCPN (244 aa). Residue 274–281 participates in ATP binding; the sequence is GPSGSGKS. The ABC transmembrane type-2 domain maps to 562–810; it reads TQYITRLSGG…VSGYWAISKL (249 aa). Helical transmembrane passes span 568–588, 598–618, 647–667, 675–695, 706–726, 732–752, and 788–808; these read LSGG…LSPS, ILFF…TLFL, AFIQ…INHL, FITY…IIAI, FIYG…LVPV, SFGW…VMVA, and GIGI…WAIS.

It belongs to the ABC transporter superfamily. ABCG family.

Its subcellular location is the membrane. The protein is ABC transporter G family member 7 (abcG7) of Dictyostelium discoideum (Social amoeba).